A 158-amino-acid chain; its full sequence is 2-C-methyl-D-erythritol 2,4-cyclodiphosphate synthase (158 aa).

Asp9 and His11 together coordinate a divalent metal cation. 4-CDP-2-C-methyl-D-erythritol 2-phosphate is bound by residues 9–11 (DVH) and 35–36 (HS). His43 contacts a divalent metal cation. 4-CDP-2-C-methyl-D-erythritol 2-phosphate contacts are provided by residues 57-59 (DIG), 62-66 (FPDTD), 133-136 (TTTE), Phe140, and Arg143.

This sequence belongs to the IspF family. As to quaternary structure, homotrimer. The cofactor is a divalent metal cation.

It carries out the reaction 4-CDP-2-C-methyl-D-erythritol 2-phosphate = 2-C-methyl-D-erythritol 2,4-cyclic diphosphate + CMP. The protein operates within isoprenoid biosynthesis; isopentenyl diphosphate biosynthesis via DXP pathway; isopentenyl diphosphate from 1-deoxy-D-xylulose 5-phosphate: step 4/6. Its function is as follows. Involved in the biosynthesis of isopentenyl diphosphate (IPP) and dimethylallyl diphosphate (DMAPP), two major building blocks of isoprenoid compounds. Catalyzes the conversion of 4-diphosphocytidyl-2-C-methyl-D-erythritol 2-phosphate (CDP-ME2P) to 2-C-methyl-D-erythritol 2,4-cyclodiphosphate (ME-CPP) with a corresponding release of cytidine 5-monophosphate (CMP). This is 2-C-methyl-D-erythritol 2,4-cyclodiphosphate synthase from Actinobacillus succinogenes (strain ATCC 55618 / DSM 22257 / CCUG 43843 / 130Z).